A 917-amino-acid chain; its full sequence is Calcium-activated chloride channel regulator 1 (917 aa).

A signal peptide spans 1-21; sequence MGSFRSSLFILVLHLLEGAQS. The metalloprotease domain stretch occupies residues 46 to 199; that stretch reads DERLIQNIKD…AIRGTNVLPQ (154 aa). Residue His-156 coordinates Zn(2+). Glu-157 is a catalytic residue. Positions 160 and 167 each coordinate Zn(2+). One can recognise a VWFA domain in the interval 306–475; that stretch reads IVCLVLDKSG…NGLIDAFGAL (170 aa). Asn-503, Asn-772, Asn-806, Asn-812, Asn-838, and Asn-893 each carry an N-linked (GlcNAc...) asparagine glycan.

The protein belongs to the CLCR family. Glycosylated. In terms of processing, the translation product is autoproteolytically cleaved by the metalloprotease domain in the endoplasmic reticulum into a N-terminal and a C-terminal products that remain physically associated with each other. The cleavage is necessary for calcium-activated chloride channel (CaCC) activation activity. In terms of tissue distribution, expressed in ileum, trachea, and the major salivary glands. In ileum, expressed to the crypt and villus epithelia, whereas in trachea expressed in both surface epithelium and submucosal glands.

The protein localises to the secreted. The protein resides in the extracellular space. In terms of biological role, may be involved in mediating calcium-activated chloride conductance. May play critical roles in goblet cell metaplasia, mucus hypersecretion, cystic fibrosis and AHR. May be involved in the regulation of mucus production and/or secretion by goblet cells. Involved in the regulation of tissue inflammation in the innate immune response. May play a role as a tumor suppressor. Induces MUC5AC. Induces a cAMP-dependent chloride conductance possibly through effects on CFTR in colon carcinoma cells. The polypeptide is Calcium-activated chloride channel regulator 1 (CLCA1) (Sus scrofa (Pig)).